We begin with the raw amino-acid sequence, 400 residues long: Dihydrolipoyllysine-residue succinyltransferase component of 2-oxoglutarate dehydrogenase complex (400 aa).

In terms of domain architecture, Lipoyl-binding spans 2–77 (GVKIIVPSLG…AVGEEIGDIN (76 aa)). Lysine 43 carries the post-translational modification N6-lipoyllysine. A compositionally biased stretch (polar residues) spans 85-97 (NSNEAAKPQTASQ). A disordered region spans residues 85 to 113 (NSNEAAKPQTASQPVPEKVPKKPAVANNT). A Peripheral subunit-binding (PSBD) domain is found at 113-150 (TLAPSVQKLVTENKLDPNNIKGTGKDGRITKGDVLETM). Catalysis depends on residues histidine 371 and aspartate 375.

It belongs to the 2-oxoacid dehydrogenase family. Forms a 24-polypeptide structural core with octahedral symmetry. Part of the 2-oxoglutarate dehydrogenase (OGDH) complex composed of E1 (2-oxoglutarate dehydrogenase), E2 (dihydrolipoamide succinyltransferase) and E3 (dihydrolipoamide dehydrogenase); the complex contains multiple copies of the three enzymatic components (E1, E2 and E3). The cofactor is (R)-lipoate.

The catalysed reaction is N(6)-[(R)-dihydrolipoyl]-L-lysyl-[protein] + succinyl-CoA = N(6)-[(R)-S(8)-succinyldihydrolipoyl]-L-lysyl-[protein] + CoA. It participates in amino-acid degradation; L-lysine degradation via saccharopine pathway; glutaryl-CoA from L-lysine: step 6/6. Functionally, E2 component of the 2-oxoglutarate dehydrogenase (OGDH) complex which catalyzes the second step in the conversion of 2-oxoglutarate to succinyl-CoA and CO(2). The protein is Dihydrolipoyllysine-residue succinyltransferase component of 2-oxoglutarate dehydrogenase complex (sucB) of Rickettsia bellii (strain RML369-C).